A 210-amino-acid chain; its full sequence is Secreted effector protein SteA (210 aa).

The protein localises to the secreted. Its subcellular location is the host cytoplasm. In terms of biological role, effector proteins function to alter host cell physiology and promote bacterial survival in host tissues. Could be required for passage of bacteria from the peritoneal cavity into the spleen, for survival and replication within host cells, or for avoiding host immune response. This Salmonella typhimurium (strain 14028s / SGSC 2262) protein is Secreted effector protein SteA (steA).